A 253-amino-acid chain; its full sequence is DnaJ homolog subfamily C member 8 (253 aa).

An N-acetylalanine modification is found at alanine 2. Position 35 is a phosphoserine (serine 35). One can recognise a J domain in the interval asparagine 57–glutamine 124. N6-acetyllysine is present on lysine 146. Basic and acidic residues predominate over residues glutamate 181–serine 222. Residues glutamate 181–glutamate 253 form a disordered region. Short sequence motifs (nuclear localization signal) lie at residues lysine 189–arginine 192 and lysine 203–arginine 206. Residue serine 222 is modified to Phosphoserine. Basic residues predominate over residues lysine 231–threonine 240. Positions glycine 232–glutamate 253 are essential for polyglutamine aggregation suppression.

As to quaternary structure, interacts with SRPK1. Interacts with HSP70 (HSPA1A or HSPA1B).

The protein resides in the nucleus. In terms of biological role, suppresses polyglutamine (polyQ) aggregation of ATXN3 in neuronal cells. This Mus musculus (Mouse) protein is DnaJ homolog subfamily C member 8 (Dnajc8).